A 202-amino-acid chain; its full sequence is Holliday junction branch migration complex subunit RuvA (202 aa).

Residues 1–65 (MIAYVEGRLA…EDALELYGFA (65 aa)) form a domain I region. Residues 66-144 (TWDERQTFIV…VEDLPAAAPL (79 aa)) form a domain II region. Positions 145–155 (VTGGAPGGVFR) are flexible linker. The domain III stretch occupies residues 155–202 (RDALAGLANLGYGEEEASHVLKEVLHGEPDLDVGGALRAALRALARGR).

The protein belongs to the RuvA family. As to quaternary structure, homotetramer. Forms an RuvA(8)-RuvB(12)-Holliday junction (HJ) complex. HJ DNA is sandwiched between 2 RuvA tetramers; dsDNA enters through RuvA and exits via RuvB. An RuvB hexamer assembles on each DNA strand where it exits the tetramer. Each RuvB hexamer is contacted by two RuvA subunits (via domain III) on 2 adjacent RuvB subunits; this complex drives branch migration. In the full resolvosome a probable DNA-RuvA(4)-RuvB(12)-RuvC(2) complex forms which resolves the HJ.

The protein localises to the cytoplasm. Its function is as follows. The RuvA-RuvB-RuvC complex processes Holliday junction (HJ) DNA during genetic recombination and DNA repair, while the RuvA-RuvB complex plays an important role in the rescue of blocked DNA replication forks via replication fork reversal (RFR). RuvA specifically binds to HJ cruciform DNA, conferring on it an open structure. The RuvB hexamer acts as an ATP-dependent pump, pulling dsDNA into and through the RuvAB complex. HJ branch migration allows RuvC to scan DNA until it finds its consensus sequence, where it cleaves and resolves the cruciform DNA. This chain is Holliday junction branch migration complex subunit RuvA, found in Nitratidesulfovibrio vulgaris (strain DP4) (Desulfovibrio vulgaris).